Here is a 385-residue protein sequence, read N- to C-terminus: Probable dual-specificity RNA methyltransferase RlmN (385 aa).

A disordered region spans residues 1 to 35 (MNVKEPAEEAAIQLRTERQRIEPEGEEQSEQPTDL). The active-site Proton acceptor is the glutamate 121. Residues 132–367 (TRDRVTVCLS…AVIREERGQD (236 aa)) enclose the Radical SAM core domain. Cysteine 139 and cysteine 372 are oxidised to a cystine. [4Fe-4S] cluster contacts are provided by cysteine 146, cysteine 150, and cysteine 153. S-adenosyl-L-methionine is bound by residues 198–199 (GE), serine 230, 253–255 (SLH), and asparagine 329. Cysteine 372 serves as the catalytic S-methylcysteine intermediate.

This sequence belongs to the radical SAM superfamily. RlmN family. It depends on [4Fe-4S] cluster as a cofactor.

Its subcellular location is the cytoplasm. The enzyme catalyses adenosine(2503) in 23S rRNA + 2 reduced [2Fe-2S]-[ferredoxin] + 2 S-adenosyl-L-methionine = 2-methyladenosine(2503) in 23S rRNA + 5'-deoxyadenosine + L-methionine + 2 oxidized [2Fe-2S]-[ferredoxin] + S-adenosyl-L-homocysteine. It carries out the reaction adenosine(37) in tRNA + 2 reduced [2Fe-2S]-[ferredoxin] + 2 S-adenosyl-L-methionine = 2-methyladenosine(37) in tRNA + 5'-deoxyadenosine + L-methionine + 2 oxidized [2Fe-2S]-[ferredoxin] + S-adenosyl-L-homocysteine. Its function is as follows. Specifically methylates position 2 of adenine 2503 in 23S rRNA and position 2 of adenine 37 in tRNAs. The chain is Probable dual-specificity RNA methyltransferase RlmN from Heliobacterium modesticaldum (strain ATCC 51547 / Ice1).